A 102-amino-acid chain; its full sequence is Small ribosomal subunit protein uS10 (102 aa).

It belongs to the universal ribosomal protein uS10 family. Part of the 30S ribosomal subunit.

In terms of biological role, involved in the binding of tRNA to the ribosomes. The polypeptide is Small ribosomal subunit protein uS10 (Sulfurihydrogenibium sp. (strain YO3AOP1)).